The primary structure comprises 275 residues: Lectin (275 aa).

An N-terminal signal peptide occupies residues 1–30 (MASLQTQMISFYAIFLSILLTTILFFKVNS). Mn(2+) is bound by residues Glu-149 and Asp-151. Residues Asp-151, Phe-153, Asn-155, and Asp-159 each contribute to the Ca(2+) site. Positions 159 and 166 each coordinate Mn(2+). A glycan (N-linked (GlcNAc...) asparagine) is linked at Asn-217.

This sequence belongs to the leguminous lectin family. Tetramer of two alpha and two beta chains.

Its function is as follows. D-mannose specific lectin. This is Lectin (LECA) from Pisum sativum (Garden pea).